Reading from the N-terminus, the 227-residue chain is ATP-dependent dethiobiotin synthetase BioD (227 aa).

Residue 13–18 (DVGKTV) coordinates ATP. Mg(2+) is bound at residue threonine 17. Lysine 38 is an active-site residue. ATP-binding positions include aspartate 55, 116–119 (EGAG), 176–177 (NR), and 205–207 (PYI). Residues aspartate 55 and glutamate 116 each coordinate Mg(2+).

This sequence belongs to the dethiobiotin synthetase family. As to quaternary structure, homodimer. Mg(2+) serves as cofactor.

Its subcellular location is the cytoplasm. The enzyme catalyses (7R,8S)-7,8-diammoniononanoate + CO2 + ATP = (4R,5S)-dethiobiotin + ADP + phosphate + 3 H(+). It functions in the pathway cofactor biosynthesis; biotin biosynthesis; biotin from 7,8-diaminononanoate: step 1/2. In terms of biological role, catalyzes a mechanistically unusual reaction, the ATP-dependent insertion of CO2 between the N7 and N8 nitrogen atoms of 7,8-diaminopelargonic acid (DAPA, also called 7,8-diammoniononanoate) to form a ureido ring. In Vibrio vulnificus (strain CMCP6), this protein is ATP-dependent dethiobiotin synthetase BioD.